The chain runs to 284 residues: L-ribulose-5-phosphate 3-epimerase UlaE (284 aa).

Belongs to the L-ribulose-5-phosphate 3-epimerase family.

It carries out the reaction L-ribulose 5-phosphate = L-xylulose 5-phosphate. Its pathway is cofactor degradation; L-ascorbate degradation; D-xylulose 5-phosphate from L-ascorbate: step 3/4. Its function is as follows. Catalyzes the isomerization of L-xylulose-5-phosphate to L-ribulose-5-phosphate. Is involved in the anaerobic L-ascorbate utilization. The protein is L-ribulose-5-phosphate 3-epimerase UlaE of Escherichia coli O139:H28 (strain E24377A / ETEC).